We begin with the raw amino-acid sequence, 75 residues long: uncharacterized protein (75 aa).

Residues cysteine 43–cysteine 67 form a dksA C4-type zinc finger.

This is an uncharacterized protein from Haemophilus influenzae (strain ATCC 51907 / DSM 11121 / KW20 / Rd).